Here is a 334-residue protein sequence, read N- to C-terminus: Methionyl-tRNA formyltransferase (334 aa).

111-114 contributes to the (6S)-5,6,7,8-tetrahydrofolate binding site; that stretch reads SILP.

The protein belongs to the Fmt family.

It catalyses the reaction L-methionyl-tRNA(fMet) + (6R)-10-formyltetrahydrofolate = N-formyl-L-methionyl-tRNA(fMet) + (6S)-5,6,7,8-tetrahydrofolate + H(+). Functionally, attaches a formyl group to the free amino group of methionyl-tRNA(fMet). The formyl group appears to play a dual role in the initiator identity of N-formylmethionyl-tRNA by promoting its recognition by IF2 and preventing the misappropriation of this tRNA by the elongation apparatus. This chain is Methionyl-tRNA formyltransferase, found in Gloeothece citriformis (strain PCC 7424) (Cyanothece sp. (strain PCC 7424)).